Here is a 340-residue protein sequence, read N- to C-terminus: MALIHEILGKLSLEGNQSCARQSALGTVKASTNFDAEKDAAAIETAIKTKGVDELTIINILTNRSNDQRQDIAFAYHRRTKKDLASALKGALSGNLETVMLGLIKTRPQYDASELKASMKGLGTDEDTLIEIICSRTNKELLDIQNAYRELYKTELEKDIVSDTSGDFRKLMVALAKGKRQEEGSVVDYEKIDQDARELYEAGVKRKGTDVGKWITIMTERSTPHLQKVFERYKSYSPYDMEESIKKEVKGDLENAFLNLVQCIQNKPLYFADRLYESMKGRGTKDKILIRTMVSRSELDMLKIRKEFKKKYGKSLHYFIGQDTKGDYQRALFNLCGGDD.

A P10 binding site region spans residues 2–25 (ALIHEILGKLSLEGNQSCARQSAL). Annexin repeat units follow at residues 34 to 105 (FDAE…GLIK), 106 to 177 (TRPQ…ALAK), 190 to 262 (EKID…NLVQ), and 266 to 337 (NKPL…NLCG).

Belongs to the annexin family. In terms of assembly, tetramer of 2 light chains (p10 proteins) and 2 heavy chains (p36 proteins).

It localises to the secreted. The protein localises to the extracellular space. It is found in the extracellular matrix. Its subcellular location is the basement membrane. Functionally, calcium-regulated membrane-binding protein whose affinity for calcium is greatly enhanced by anionic phospholipids. It binds two calcium ions with high affinity. The polypeptide is Annexin A2-A (anxa2-a) (Xenopus laevis (African clawed frog)).